Consider the following 558-residue polypeptide: Dihydroxy-acid dehydratase (558 aa).

Position 54 (C54) interacts with [2Fe-2S] cluster. D86 provides a ligand contact to Mg(2+). Position 127 (C127) interacts with [2Fe-2S] cluster. Mg(2+) is bound by residues D128 and K129. K129 is modified (N6-carboxylysine). C199 is a [2Fe-2S] cluster binding site. E448 lines the Mg(2+) pocket. Catalysis depends on S474, which acts as the Proton acceptor.

Belongs to the IlvD/Edd family. As to quaternary structure, homodimer. [2Fe-2S] cluster is required as a cofactor. Mg(2+) serves as cofactor.

The catalysed reaction is (2R)-2,3-dihydroxy-3-methylbutanoate = 3-methyl-2-oxobutanoate + H2O. It carries out the reaction (2R,3R)-2,3-dihydroxy-3-methylpentanoate = (S)-3-methyl-2-oxopentanoate + H2O. Its pathway is amino-acid biosynthesis; L-isoleucine biosynthesis; L-isoleucine from 2-oxobutanoate: step 3/4. It functions in the pathway amino-acid biosynthesis; L-valine biosynthesis; L-valine from pyruvate: step 3/4. Its function is as follows. Functions in the biosynthesis of branched-chain amino acids. Catalyzes the dehydration of (2R,3R)-2,3-dihydroxy-3-methylpentanoate (2,3-dihydroxy-3-methylvalerate) into 2-oxo-3-methylpentanoate (2-oxo-3-methylvalerate) and of (2R)-2,3-dihydroxy-3-methylbutanoate (2,3-dihydroxyisovalerate) into 2-oxo-3-methylbutanoate (2-oxoisovalerate), the penultimate precursor to L-isoleucine and L-valine, respectively. This Acidothermus cellulolyticus (strain ATCC 43068 / DSM 8971 / 11B) protein is Dihydroxy-acid dehydratase.